Consider the following 500-residue polypeptide: Protein PIGMENT DEFECTIVE 338, chloroplastic (500 aa).

A chloroplast-targeting transit peptide spans 1–63 (MQTLLCQPCK…FAFRGFSICR (63 aa)). S1 motif domains are found at residues 156 to 265 (KPGD…LSSR), 283 to 351 (NEPI…LSEK), and 362 to 431 (GTLL…LSIA).

It belongs to the bacterial ribosomal protein bS1 family. As to quaternary structure, interacts with CRP1 and PRFB3. Present in leaves (at protein level). Confined to leaf chlorenchyma cells.

The protein localises to the plastid. Its subcellular location is the chloroplast. RNA-binding protein that acts as an RNA chaperone to remodel RNA structure and activates their translation. Required for seed pigmentation. Necessary for chloroplast development and subsequent photosynthetic electron flow, as well as for non-photochemical quenching (NPQ). Rubisco regulatory factor which regulates the concerted biogenesis of NDH, PSI (including PsaA, PsaB, PsaD, PsaF, PsaL, PsaG, PsaK and NdhH) and Cytb(6)f (including PetA, PetB, PetC and PetD) complexes. Binds specifically to and involved in the post-transcriptional regulation of plastid-encoded mRNAs (e.g. rbcL, petA, petB, petD and Ycf1), thus modulating expression, cellular localization/compartmentalization, and photosynthetic function. This is Protein PIGMENT DEFECTIVE 338, chloroplastic from Arabidopsis thaliana (Mouse-ear cress).